A 302-amino-acid chain; its full sequence is Sulfate adenylyltransferase subunit 2 (302 aa).

It belongs to the PAPS reductase family. CysD subfamily. As to quaternary structure, heterodimer composed of CysD, the smaller subunit, and CysN.

It catalyses the reaction sulfate + ATP + H(+) = adenosine 5'-phosphosulfate + diphosphate. It participates in sulfur metabolism; hydrogen sulfide biosynthesis; sulfite from sulfate: step 1/3. With CysN forms the ATP sulfurylase (ATPS) that catalyzes the adenylation of sulfate producing adenosine 5'-phosphosulfate (APS) and diphosphate, the first enzymatic step in sulfur assimilation pathway. APS synthesis involves the formation of a high-energy phosphoric-sulfuric acid anhydride bond driven by GTP hydrolysis by CysN coupled to ATP hydrolysis by CysD. The chain is Sulfate adenylyltransferase subunit 2 from Salmonella agona (strain SL483).